We begin with the raw amino-acid sequence, 664 residues long: UV-stimulated scaffold protein A homolog (664 aa).

Residues 10 to 153 (KVIGLIEKAT…LKNTLKLKFP (144 aa)) are VHS-like. Positions 148–180 (LKLKFPDLQANAARIQRERQEREMKTKEILRNK) form a coiled coil. Disordered stretches follow at residues 330–350 (HGNE…DGKV) and 362–403 (MRTQ…GNSL). The segment covering 334–347 (ETNEEEEDIWEEDD) has biased composition (acidic residues). Residues 363-374 (RTQQSENSSLPS) are compositionally biased toward polar residues. The span at 377 to 387 (EAKKSTSEARS) shows a compositional bias: basic and acidic residues. Residues 388–402 (NKVSNTKKVGSSGNS) are compositionally biased toward polar residues. The segment at 473 to 500 (TPPCRASLKKGGLCQRRDLRVCPFHGPI) adopts a UVSSA-type zinc-finger fold. Zn(2+) is bound by residues C476, C486, C494, and H497. Disordered stretches follow at residues 514–546 (SPLD…DPNQ) and 640–664 (VKGT…ANQW). Polar residues-rich tracts occupy residues 521 to 533 (NQTS…NQDV) and 640 to 650 (VKGTNPQQLAQ).

The protein belongs to the UVSSA family.

It localises to the chromosome. This is UV-stimulated scaffold protein A homolog from Arabidopsis thaliana (Mouse-ear cress).